Reading from the N-terminus, the 357-residue chain is Peptide chain release factor 1 (357 aa).

At glutamine 233 the chain carries N5-methylglutamine.

This sequence belongs to the prokaryotic/mitochondrial release factor family. In terms of processing, methylated by PrmC. Methylation increases the termination efficiency of RF1.

It is found in the cytoplasm. Functionally, peptide chain release factor 1 directs the termination of translation in response to the peptide chain termination codons UAG and UAA. This is Peptide chain release factor 1 from Flavobacterium psychrophilum (strain ATCC 49511 / DSM 21280 / CIP 103535 / JIP02/86).